A 457-amino-acid polypeptide reads, in one-letter code: Siroheme synthase (457 aa).

Positions 1 to 204 are precorrin-2 dehydrogenase /sirohydrochlorin ferrochelatase; it reads MDHLPIFCQL…NDQKAITETT (204 aa). Residues 22–23 and 43–44 contribute to the NAD(+) site; these read DV and LA. S128 carries the phosphoserine modification. The tract at residues 216 to 457 is uroporphyrinogen-III C-methyltransferase; sequence GEVVLVGAGP…RDKLNWFSNH (242 aa). S-adenosyl-L-methionine is bound at residue P225. D248 serves as the catalytic Proton acceptor. Residue K270 is the Proton donor of the active site. Residues 301-303, I306, 331-332, M382, and G411 contribute to the S-adenosyl-L-methionine site; these read GGD and TA.

This sequence in the N-terminal section; belongs to the precorrin-2 dehydrogenase / sirohydrochlorin ferrochelatase family. It in the C-terminal section; belongs to the precorrin methyltransferase family.

It catalyses the reaction uroporphyrinogen III + 2 S-adenosyl-L-methionine = precorrin-2 + 2 S-adenosyl-L-homocysteine + H(+). The catalysed reaction is precorrin-2 + NAD(+) = sirohydrochlorin + NADH + 2 H(+). It carries out the reaction siroheme + 2 H(+) = sirohydrochlorin + Fe(2+). Its pathway is cofactor biosynthesis; adenosylcobalamin biosynthesis; precorrin-2 from uroporphyrinogen III: step 1/1. It participates in cofactor biosynthesis; adenosylcobalamin biosynthesis; sirohydrochlorin from precorrin-2: step 1/1. It functions in the pathway porphyrin-containing compound metabolism; siroheme biosynthesis; precorrin-2 from uroporphyrinogen III: step 1/1. The protein operates within porphyrin-containing compound metabolism; siroheme biosynthesis; siroheme from sirohydrochlorin: step 1/1. Its pathway is porphyrin-containing compound metabolism; siroheme biosynthesis; sirohydrochlorin from precorrin-2: step 1/1. In terms of biological role, multifunctional enzyme that catalyzes the SAM-dependent methylations of uroporphyrinogen III at position C-2 and C-7 to form precorrin-2 via precorrin-1. Then it catalyzes the NAD-dependent ring dehydrogenation of precorrin-2 to yield sirohydrochlorin. Finally, it catalyzes the ferrochelation of sirohydrochlorin to yield siroheme. This is Siroheme synthase from Escherichia coli O6:K15:H31 (strain 536 / UPEC).